The following is a 351-amino-acid chain: Protein pelota homolog (351 aa).

The protein belongs to the eukaryotic release factor 1 family. Pelota subfamily. Monomer. A divalent metal cation is required as a cofactor.

The protein localises to the cytoplasm. May function in recognizing stalled ribosomes, interact with stem-loop structures in stalled mRNA molecules, and effect endonucleolytic cleavage of the mRNA. May play a role in the release non-functional ribosomes and degradation of damaged mRNAs. Has endoribonuclease activity. The chain is Protein pelota homolog from Methanosphaera stadtmanae (strain ATCC 43021 / DSM 3091 / JCM 11832 / MCB-3).